The following is a 329-amino-acid chain: Beta-ketoacyl-[acyl-carrier-protein] synthase III (329 aa).

Active-site residues include C123 and H256. Residues 257 to 261 (QANIR) form an ACP-binding region. Residue N286 is part of the active site.

It belongs to the thiolase-like superfamily. FabH family. As to quaternary structure, homodimer.

It is found in the cytoplasm. The catalysed reaction is malonyl-[ACP] + acetyl-CoA + H(+) = 3-oxobutanoyl-[ACP] + CO2 + CoA. Its pathway is lipid metabolism; fatty acid biosynthesis. Its function is as follows. Catalyzes the condensation reaction of fatty acid synthesis by the addition to an acyl acceptor of two carbons from malonyl-ACP. Catalyzes the first condensation reaction which initiates fatty acid synthesis and may therefore play a role in governing the total rate of fatty acid production. Possesses both acetoacetyl-ACP synthase and acetyl transacylase activities. Its substrate specificity determines the biosynthesis of branched-chain and/or straight-chain of fatty acids. In Burkholderia orbicola (strain AU 1054), this protein is Beta-ketoacyl-[acyl-carrier-protein] synthase III.